A 57-amino-acid chain; its full sequence is Phylloseptin-Az4 (57 aa).

The first 13 residues, 1–13 (LVLFLGLVSLSIC), serve as a signal peptide directing secretion. A propeptide spanning residues 14-35 (EEEKRETEEEENDQEEDDKSEE) is cleaved from the precursor. The disordered stretch occupies residues 16 to 35 (EKRETEEEENDQEEDDKSEE). The segment covering 21–32 (EEEENDQEEDDK) has biased composition (acidic residues). The residue at position 56 (L56) is a Leucine amide.

Expressed by the skin glands.

The protein resides in the secreted. Has antibacterial activity against the Gram-positive bacterium M.luteus ATCC 49732 (MIC=1.3 uM). Does not inhibit the growth of the fungus C.albicans. The polypeptide is Phylloseptin-Az4 (psn12) (Pithecopus azureus (Orange-legged monkey tree frog)).